The primary structure comprises 128 residues: Sulfurtransferase TusD (128 aa).

Cys78 functions as the Cysteine persulfide intermediate in the catalytic mechanism.

It belongs to the DsrE/TusD family. In terms of assembly, heterohexamer, formed by a dimer of trimers. The hexameric TusBCD complex contains 2 copies each of TusB, TusC and TusD. The TusBCD complex interacts with TusE.

The protein localises to the cytoplasm. Part of a sulfur-relay system required for 2-thiolation of 5-methylaminomethyl-2-thiouridine (mnm(5)s(2)U) at tRNA wobble positions. Accepts sulfur from TusA and transfers it in turn to TusE. The sequence is that of Sulfurtransferase TusD from Buchnera aphidicola subsp. Schizaphis graminum (strain Sg).